The primary structure comprises 399 residues: Putative glutamate--cysteine ligase 2 (399 aa).

The interval Pro377–Ala399 is disordered.

The protein belongs to the glutamate--cysteine ligase type 2 family. YbdK subfamily.

The enzyme catalyses L-cysteine + L-glutamate + ATP = gamma-L-glutamyl-L-cysteine + ADP + phosphate + H(+). In terms of biological role, ATP-dependent carboxylate-amine ligase which exhibits weak glutamate--cysteine ligase activity. This chain is Putative glutamate--cysteine ligase 2, found in Thermobifida fusca (strain YX).